The following is a 229-amino-acid chain: 5'-methylthioadenosine/S-adenosylhomocysteine nucleosidase (229 aa).

The Proton acceptor role is filled by glutamate 12. Residues glycine 78, isoleucine 152, and 173-174 contribute to the substrate site; that span reads ME. Residue aspartate 197 is the Proton donor of the active site.

It belongs to the PNP/UDP phosphorylase family. MtnN subfamily.

It carries out the reaction S-adenosyl-L-homocysteine + H2O = S-(5-deoxy-D-ribos-5-yl)-L-homocysteine + adenine. The enzyme catalyses S-methyl-5'-thioadenosine + H2O = 5-(methylsulfanyl)-D-ribose + adenine. The catalysed reaction is 5'-deoxyadenosine + H2O = 5-deoxy-D-ribose + adenine. It participates in amino-acid biosynthesis; L-methionine biosynthesis via salvage pathway; S-methyl-5-thio-alpha-D-ribose 1-phosphate from S-methyl-5'-thioadenosine (hydrolase route): step 1/2. Its function is as follows. Catalyzes the irreversible cleavage of the glycosidic bond in both 5'-methylthioadenosine (MTA) and S-adenosylhomocysteine (SAH/AdoHcy) to adenine and the corresponding thioribose, 5'-methylthioribose and S-ribosylhomocysteine, respectively. Also cleaves 5'-deoxyadenosine, a toxic by-product of radical S-adenosylmethionine (SAM) enzymes, into 5-deoxyribose and adenine. The protein is 5'-methylthioadenosine/S-adenosylhomocysteine nucleosidase of Histophilus somni (strain 129Pt) (Haemophilus somnus).